A 446-amino-acid polypeptide reads, in one-letter code: Tryptophan dimethylallyltransferase (446 aa).

L-tryptophan is bound by residues 83-84 and Glu-92; that span reads IL. 3 residues coordinate substrate: Arg-103, Lys-189, and Tyr-191. Positions 193 and 246 each coordinate L-tryptophan. Positions 259, 261, 263, 345, and 347 each coordinate substrate.

This sequence belongs to the tryptophan dimethylallyltransferase family. In terms of assembly, homodimer.

It carries out the reaction L-tryptophan + dimethylallyl diphosphate = 4-(3-methylbut-2-enyl)-L-tryptophan + diphosphate. It functions in the pathway alkaloid biosynthesis; ergot alkaloid biosynthesis. Functionally, tryptophan dimethylallyltransferase; part of the gene cluster that mediates the biosynthesis of fungal ergot alkaloid. DmaW catalyzes the first step of ergot alkaloid biosynthesis by condensing dimethylallyl diphosphate (DMAP) and tryptophan to form 4-dimethylallyl-L-tryptophan. The second step is catalyzed by the methyltransferase easF that methylates 4-dimethylallyl-L-tryptophan in the presence of S-adenosyl-L-methionine, resulting in the formation of 4-dimethylallyl-L-abrine. The catalase easC and the FAD-dependent oxidoreductase easE then transform 4-dimethylallyl-L-abrine to chanoclavine-I which is further oxidized by easD in the presence of NAD(+), resulting in the formation of chanoclavine-I aldehyde. Chanoclavine-I aldehyde is the precursor of ergoamides and ergopeptines in Clavicipitaceae, and clavine-type alcaloids such as fumiclavine in Trichocomaceae. However, the metabolites downstream of chanoclavine-I aldehyde in Arthrodermataceae have not been identified yet. The polypeptide is Tryptophan dimethylallyltransferase (Arthroderma otae (strain ATCC MYA-4605 / CBS 113480) (Microsporum canis)).